The following is a 161-amino-acid chain: UPF0225 protein GSU1048 (161 aa).

Belongs to the UPF0225 family.

In Geobacter sulfurreducens (strain ATCC 51573 / DSM 12127 / PCA), this protein is UPF0225 protein GSU1048.